The following is a 376-amino-acid chain: Putative clathrin assembly protein At1g25240 (376 aa).

In terms of domain architecture, ENTH spans 25 to 156 (KTSFRNPDLD…FFLSDQIRRR (132 aa)).

The protein localises to the membrane. It is found in the clathrin-coated pit. Its subcellular location is the golgi apparatus. It localises to the cytoplasmic vesicle. The protein resides in the clathrin-coated vesicle. The polypeptide is Putative clathrin assembly protein At1g25240 (Arabidopsis thaliana (Mouse-ear cress)).